We begin with the raw amino-acid sequence, 1394 residues long: Tubulin glycylase 3E (1394 aa).

Disordered regions lie at residues 201-230 (KKKSNFQNKSQSQLNNHKNEEKKPSQQRKE), 563-582 (NQKDLQSNQTSSVISQQNSI), 620-663 (DENE…TSNF), and 682-706 (STVKNSDNNNQNQTNPQNQNTNLKE). The segment covering 205-216 (NFQNKSQSQLNN) has biased composition (low complexity). Basic and acidic residues predominate over residues 217 to 230 (HKNEEKKPSQQRKE). Positions 568–582 (QSNQTSSVISQQNSI) are enriched in low complexity. A compositionally biased stretch (polar residues) spans 627-655 (KENVLQQKKNQSNQIVTSQQQSNNYFKQE). Low complexity predominate over residues 682–703 (STVKNSDNNNQNQTNPQNQNTN). In terms of domain architecture, TTL spans 911-1250 (RFIFNITVIA…QNNLQEDLEI (340 aa)). Residues 1058 to 1061 (QKYI), lysine 1079, and aspartate 1081 each bind ATP. 2 consecutive IQ domains span residues 1320–1349 (QYWGAIKIQSKIRSFLAKKKLQRLKNQKFT) and 1348–1377 (FTFAAIKIQQKMRQFLAKKQLNILKKQQQT).

The protein resides in the cell projection. It localises to the cilium. Its subcellular location is the cytoplasm. The protein localises to the cytoskeleton. It is found in the cilium axoneme. Its function is as follows. Probable glycylase which modifies tubulin, generating side chains of glycine on the gamma-carboxyl groups of specific glutamate residues within the C-terminal tail of tubulin. This is Tubulin glycylase 3E (TTLL3E) from Tetrahymena thermophila (strain SB210).